The following is a 235-amino-acid chain: Uridylate kinase (235 aa).

10 to 11 contributes to the ATP binding site; sequence GS. Residue G45 participates in UMP binding. Positions 46 and 50 each coordinate ATP. UMP-binding positions include D67 and 115–121; that span reads VTPGQTT. Residues T141, Y147, and D150 each contribute to the ATP site.

Belongs to the UMP kinase family. Homohexamer.

Its subcellular location is the cytoplasm. The enzyme catalyses UMP + ATP = UDP + ADP. Its pathway is pyrimidine metabolism; CTP biosynthesis via de novo pathway; UDP from UMP (UMPK route): step 1/1. Inhibited by UTP. Catalyzes the reversible phosphorylation of UMP to UDP. The protein is Uridylate kinase of Methanocorpusculum labreanum (strain ATCC 43576 / DSM 4855 / Z).